Here is a 423-residue protein sequence, read N- to C-terminus: Maltoporin 1 (423 aa).

The N-terminal stretch at Met1–Ala23 is a signal peptide.

This sequence belongs to the porin LamB (TC 1.B.3) family. Homotrimer formed of three 18-stranded antiparallel beta-barrels, containing three independent channels.

It is found in the cell outer membrane. The enzyme catalyses beta-maltose(in) = beta-maltose(out). In terms of biological role, involved in the transport of maltose and maltodextrins. This Klebsiella pneumoniae subsp. pneumoniae (strain ATCC 700721 / MGH 78578) protein is Maltoporin 1.